The sequence spans 511 residues: Cobyric acid synthase (511 aa).

The GATase cobBQ-type domain maps to 251–443 (LLDIAIICLP…IHGIFDNDVF (193 aa)). The active-site Nucleophile is Cys-332. His-435 is a catalytic residue.

This sequence belongs to the CobB/CobQ family. CobQ subfamily.

It functions in the pathway cofactor biosynthesis; adenosylcobalamin biosynthesis. Functionally, catalyzes amidations at positions B, D, E, and G on adenosylcobyrinic A,C-diamide. NH(2) groups are provided by glutamine, and one molecule of ATP is hydrogenolyzed for each amidation. This Listeria monocytogenes serovar 1/2a (strain ATCC BAA-679 / EGD-e) protein is Cobyric acid synthase.